The chain runs to 133 residues: Lymphocyte antigen 6 complex locus protein G6d (133 aa).

An N-terminal signal peptide occupies residues 1–19 (MKPQFVGILLSSLLGAALG). Residues 22–116 (MRCYNCGGSP…ASHVAPAGIL (95 aa)) form the UPAR/Ly6 domain. Cys-27 and Cys-35 form a disulfide bridge. O-linked (GalNAc...) threonine glycosylation is found at Thr-40 and Thr-41. Cystine bridges form between Cys-42/Cys-71 and Cys-77/Cys-96. The GPI-anchor amidated serine moiety is linked to residue Ser-104. The propeptide at 105–133 (AVASHVAPAGILAAAATALTCLLPGLWSG) is removed in mature form.

Homodimer. Post-translationally, O-glycosylated. In terms of tissue distribution, expressed in the adult lung, and in fetal liver, lung, kidney, brain and spleen.

The protein localises to the cell membrane. Its subcellular location is the cell projection. It is found in the filopodium. The protein is Lymphocyte antigen 6 complex locus protein G6d (LY6G6D) of Homo sapiens (Human).